Reading from the N-terminus, the 673-residue chain is DNA ligase (673 aa).

NAD(+)-binding positions include 33 to 37, 83 to 84, and glutamate 117; these read DHQYD and SL. Lysine 119 serves as the catalytic N6-AMP-lysine intermediate. NAD(+) is bound by residues arginine 140, glutamate 175, lysine 282, and lysine 306. Residues cysteine 400, cysteine 403, cysteine 418, and cysteine 424 each contribute to the Zn(2+) site. The region spanning 592 to 673 is the BRCT domain; it reads RGSSAISGKT…WVKMVEDARS (82 aa).

Belongs to the NAD-dependent DNA ligase family. LigA subfamily. Requires Mg(2+) as cofactor. The cofactor is Mn(2+).

The catalysed reaction is NAD(+) + (deoxyribonucleotide)n-3'-hydroxyl + 5'-phospho-(deoxyribonucleotide)m = (deoxyribonucleotide)n+m + AMP + beta-nicotinamide D-nucleotide.. DNA ligase that catalyzes the formation of phosphodiester linkages between 5'-phosphoryl and 3'-hydroxyl groups in double-stranded DNA using NAD as a coenzyme and as the energy source for the reaction. It is essential for DNA replication and repair of damaged DNA. In Anaplasma marginale (strain St. Maries), this protein is DNA ligase.